A 189-amino-acid polypeptide reads, in one-letter code: Insecticyanin-A (189 aa).

2 disulfide bridges follow: C9-C119 and C43-C175.

This sequence belongs to the calycin superfamily. Lipocalin family. As to quaternary structure, homotetramer. Synthesized only in the caterpillars, apparently by the epidermis and secreted into the hemolymph. The protein is passed over from the larval hemolymph to that of pupae and adults and is sequestered in the eggs.

Its subcellular location is the secreted. This protein binds a chromophore: biliverdin IX, isomer gamma. Mixed with lipoprotein-bound carotenes, this blue protein provides hornworms with their green cryptic coloration which serves a camouflage. The chain is Insecticyanin-A (INSA) from Manduca sexta (Tobacco hawkmoth).